The following is a 345-amino-acid chain: Phenylalanine--tRNA ligase alpha subunit (345 aa).

A Mg(2+)-binding site is contributed by Glu-262.

Belongs to the class-II aminoacyl-tRNA synthetase family. Phe-tRNA synthetase alpha subunit type 1 subfamily. Tetramer of two alpha and two beta subunits. The cofactor is Mg(2+).

The protein localises to the cytoplasm. The catalysed reaction is tRNA(Phe) + L-phenylalanine + ATP = L-phenylalanyl-tRNA(Phe) + AMP + diphosphate + H(+). The sequence is that of Phenylalanine--tRNA ligase alpha subunit from Ehrlichia canis (strain Jake).